Here is a 252-residue protein sequence, read N- to C-terminus: Adenosylcobinamide-GDP ribazoletransferase (252 aa).

Transmembrane regions (helical) follow at residues 34–54 (GASFMPLVGVIVGGIQWIIYK), 55–75 (LCIIIFSLNVSIVIVILAGIV), 113–133 (YACLAIIIDILLKYSFFCSIV), 138–158 (LIIIIAPVMSRFSIVFIAFIG), 174–194 (IGKWQLFWAAFITVITLFFLM), 198–218 (FIYVIILIFAGLFMSFLFNVF), and 230–250 (LLGANNEIVEILTMVMLCVII).

Belongs to the CobS family. Requires Mg(2+) as cofactor.

The protein resides in the cell membrane. It carries out the reaction alpha-ribazole + adenosylcob(III)inamide-GDP = adenosylcob(III)alamin + GMP + H(+). The catalysed reaction is alpha-ribazole 5'-phosphate + adenosylcob(III)inamide-GDP = adenosylcob(III)alamin 5'-phosphate + GMP + H(+). The protein operates within cofactor biosynthesis; adenosylcobalamin biosynthesis; adenosylcobalamin from cob(II)yrinate a,c-diamide: step 7/7. Its function is as follows. Joins adenosylcobinamide-GDP and alpha-ribazole to generate adenosylcobalamin (Ado-cobalamin). Also synthesizes adenosylcobalamin 5'-phosphate from adenosylcobinamide-GDP and alpha-ribazole 5'-phosphate. The chain is Adenosylcobinamide-GDP ribazoletransferase from Clostridium kluyveri (strain NBRC 12016).